The sequence spans 442 residues: UDP-N-acetylmuramate--L-alanine ligase (442 aa).

Residue 109 to 115 participates in ATP binding; the sequence is GAHGKTS.

This sequence belongs to the MurCDEF family.

It is found in the cytoplasm. The enzyme catalyses UDP-N-acetyl-alpha-D-muramate + L-alanine + ATP = UDP-N-acetyl-alpha-D-muramoyl-L-alanine + ADP + phosphate + H(+). Its pathway is cell wall biogenesis; peptidoglycan biosynthesis. In terms of biological role, cell wall formation. This is UDP-N-acetylmuramate--L-alanine ligase from Streptococcus pyogenes serotype M18 (strain MGAS8232).